A 253-amino-acid polypeptide reads, in one-letter code: Zinc import ATP-binding protein ZnuC (253 aa).

Residues V6–A227 enclose the ABC transporter domain. G38–S45 provides a ligand contact to ATP.

This sequence belongs to the ABC transporter superfamily. Zinc importer (TC 3.A.1.15.5) family. As to quaternary structure, the complex is composed of two ATP-binding proteins (ZnuC), two transmembrane proteins (ZnuB) and a solute-binding protein (ZnuA).

The protein localises to the cell inner membrane. It carries out the reaction Zn(2+)(out) + ATP(in) + H2O(in) = Zn(2+)(in) + ADP(in) + phosphate(in) + H(+)(in). Functionally, part of the ABC transporter complex ZnuABC involved in zinc import. Responsible for energy coupling to the transport system. This chain is Zinc import ATP-binding protein ZnuC, found in Yersinia pseudotuberculosis serotype I (strain IP32953).